Reading from the N-terminus, the 287-residue chain is Hydroxysteroid 11-beta-dehydrogenase 1-like protein (287 aa).

The first 22 residues, 1 to 22, serve as a signal peptide directing secretion; sequence MKLYAKLLLCSICVAFIAVRWS. Residues 40–66, 91–92, and 118–120 each bind NADP(+); these read GASTGIGEQLAYHYARLGAQIVITARR, DM, and NHI. Ser-169 serves as a coordination point for substrate. Tyr-182 acts as the Proton acceptor in catalysis. NADP(+)-binding positions include 182–186 and 215–221; these read YASTK and GLIDTDS.

The protein belongs to the short-chain dehydrogenases/reductases (SDR) family.

It is found in the secreted. It carries out the reaction cortisone + NADPH + H(+) = cortisol + NADP(+). Functionally, unidirectional NADP(+)-dependent cortisol dehydrogenase (in vitro). The protein is Hydroxysteroid 11-beta-dehydrogenase 1-like protein (hsd11b1l) of Danio rerio (Zebrafish).